We begin with the raw amino-acid sequence, 518 residues long: Retinal dehydrogenase 2 (518 aa).

Tyrosine 168 is modified (phosphotyrosine). NAD(+)-binding positions include 184-186 (IPW), 210-213 (KPAE), and 264-266 (STE). Glutamate 286 (proton acceptor) is an active-site residue. The active-site Nucleophile is the cysteine 320. Phosphoserine is present on serine 351. NAD(+)-binding positions include 366-370 (KQYNK) and glutamate 417.

This sequence belongs to the aldehyde dehydrogenase family. As to quaternary structure, homotetramer.

The protein localises to the cytoplasm. It carries out the reaction retinal + NAD(+) + H2O = retinoate + NADH + 2 H(+). The enzyme catalyses all-trans-retinal + NAD(+) + H2O = all-trans-retinoate + NADH + 2 H(+). It catalyses the reaction all-trans-13,14-dihydroretinal + NAD(+) + H2O = all-trans-13,14-dihydroretinoate + NADH + 2 H(+). It participates in cofactor metabolism; retinol metabolism. Functionally, catalyzes the NAD-dependent oxidation of aldehyde substrates, such as all-trans-retinal and all-trans-13,14-dihydroretinal, to their corresponding carboxylic acids, all-trans-retinoate and all-trans-13,14-dihydroretinoate, respectively. Retinoate signaling is critical for the transcriptional control of many genes, for instance it is crucial for initiation of meiosis in both male and female. Recognizes retinal as substrate, both in its free form and when bound to cellular retinol-binding protein. Lacks activity with benzaldehyde, acetaldehyde and octanal. Displays complete lack of activity with citral. The sequence is that of Retinal dehydrogenase 2 (Aldh1a2) from Mus musculus (Mouse).